The primary structure comprises 406 residues: Pyridinium-3,5-bisthiocarboxylic acid mononucleotide nickel insertion protein (406 aa).

Belongs to the LarC family.

The enzyme catalyses Ni(II)-pyridinium-3,5-bisthiocarboxylate mononucleotide = pyridinium-3,5-bisthiocarboxylate mononucleotide + Ni(2+). Functionally, involved in the biosynthesis of a nickel-pincer cofactor ((SCS)Ni(II) pincer complex). Binds Ni(2+), and functions in nickel delivery to pyridinium-3,5-bisthiocarboxylic acid mononucleotide (P2TMN), to form the mature cofactor. Is thus probably required for the activation of nickel-pincer cofactor-dependent enzymes. This chain is Pyridinium-3,5-bisthiocarboxylic acid mononucleotide nickel insertion protein, found in Akkermansia muciniphila (strain ATCC BAA-835 / DSM 22959 / JCM 33894 / BCRC 81048 / CCUG 64013 / CIP 107961 / Muc).